The chain runs to 88 residues: Small ribosomal subunit protein bS20 (88 aa).

The protein belongs to the bacterial ribosomal protein bS20 family.

Functionally, binds directly to 16S ribosomal RNA. The sequence is that of Small ribosomal subunit protein bS20 from Bartonella henselae (strain ATCC 49882 / DSM 28221 / CCUG 30454 / Houston 1) (Rochalimaea henselae).